The chain runs to 199 residues: Protein GrpE (199 aa).

Over residues M1 to Q17 the composition is skewed to polar residues. The disordered stretch occupies residues M1 to F36.

Belongs to the GrpE family. As to quaternary structure, homodimer.

It is found in the cytoplasm. In terms of biological role, participates actively in the response to hyperosmotic and heat shock by preventing the aggregation of stress-denatured proteins, in association with DnaK and GrpE. It is the nucleotide exchange factor for DnaK and may function as a thermosensor. Unfolded proteins bind initially to DnaJ; upon interaction with the DnaJ-bound protein, DnaK hydrolyzes its bound ATP, resulting in the formation of a stable complex. GrpE releases ADP from DnaK; ATP binding to DnaK triggers the release of the substrate protein, thus completing the reaction cycle. Several rounds of ATP-dependent interactions between DnaJ, DnaK and GrpE are required for fully efficient folding. The sequence is that of Protein GrpE from Ehrlichia canis (strain Jake).